The sequence spans 101 residues: Protein translation factor SUI1 homolog (101 aa).

Belongs to the SUI1 family.

The protein is Protein translation factor SUI1 homolog of Methanothermobacter thermautotrophicus (strain ATCC 29096 / DSM 1053 / JCM 10044 / NBRC 100330 / Delta H) (Methanobacterium thermoautotrophicum).